The sequence spans 526 residues: Thymocyte selection-associated high mobility group box protein TOX (526 aa).

A compositionally biased stretch (polar residues) spans 194-203 (NMGGTNVAHN). The segment at 194-264 (NMGGTNVAHN…KKDPNEPQKP (71 aa)) is disordered. Low complexity predominate over residues 209–220 (GSKSATPSPSSS). A compositionally biased stretch (basic and acidic residues) spans 228–245 (DASKINGGEKRPASDMGK). Positions 237–256 (KRPASDMGKKPKTPKKKKKK) match the Nuclear localization signal motif. Residues 246 to 256 (KPKTPKKKKKK) are compositionally biased toward basic residues. The HMG box DNA-binding region spans 261-329 (PQKPVSAYAL…EYLKQLAAYR (69 aa)).

It belongs to the high motility group (HMG) box superfamily. In terms of assembly, interacts with HBO1 complex composed at least of KAT7/HBO1, ING4, MEAF6, and JADE2; this complex is involved in histone acetylation. Interacts with DNMT1, LEO1, PAF1, SAP130 and SIN3A; these interactors regulate chromatin remodeling. Interacts with an array of proteins involved in RNA processing and translation and DNA replication. Expressed in neurons of the subventricular zone (at protein level). Expressed in distinct subpopulations of thymocytes undergoing positive selection: double CD4-positive CD8-positive (DP) cells, CD4-positive CD8-low transitional cells and in single CD4-positive and CD8-positive cells (at protein level). Expressed in ILC progenitors and mature ILC subsets: ILC1, ILC2 and ILC3 (at protein level). Expressed in lymphoid tissue-inducer cells and bone marrow NK cell subsets. Abundant in thymus, liver and brain. Also detected in small intestine, spleen, stomach and testis. Highly expressed in tumor-infiltrating CD8-positive T cells (at protein level).

The protein resides in the nucleus. Transcriptional regulator with a major role in neural stem cell commitment and corticogenesis as well as in lymphoid cell development and lymphoid tissue organogenesis. Binds to GC-rich DNA sequences in the proximity of transcription start sites and may alter chromatin structure, modifying access of transcription factors to DNA. During cortical development, controls the neural stem cell pool by inhibiting the switch from proliferative to differentiating progenitors. Beyond progenitor cells, promotes neurite outgrowth in newborn neurons migrating to reach the cortical plate. May activate or repress critical genes for neural stem cell fate such as SOX2, EOMES and ROBO2. Plays an essential role in the development of lymphoid tissue-inducer (LTi) cells, a subset necessary for the formation of secondary lymphoid organs: peripheral lymph nodes and Peyer's patches. Acts as a developmental checkpoint and regulates thymocyte positive selection toward T cell lineage commitment. Required for the development of various T cell subsets, including CD4-positive helper T cells, CD8-positive cytotoxic T cells, regulatory T cells and CD1D-dependent natural killer T (NKT) cells. Required for the differentiation of common lymphoid progenitors (CMP) to innate lymphoid cells (ILC). May regulate the NOTCH-mediated gene program, promoting differentiation of the ILC lineage. Required at the progenitor phase of NK cell development in the bone marrow to specify NK cell lineage commitment. Upon chronic antigen stimulation, diverts T cell development by promoting the generation of exhaustive T cells, while suppressing effector and memory T cell programming. May regulate the expression of genes encoding inhibitory receptors such as PDCD1 and induce the exhaustion program, to prevent the overstimulation of T cells and activation-induced cell death. This is Thymocyte selection-associated high mobility group box protein TOX from Mus musculus (Mouse).